Consider the following 489-residue polypeptide: MITIPYLTAVSTYFSYGLLFAFGQLRDYSRLIFDWWRTNNLQGYAPICLAHEDFYIRRLYHRIQDCFGRPISSAPDAWIDVVERVSDDNNKTLKRTTKTSRCLNLGSYNYLGFGSFDEYCTPRVIESLKKFSASTCSSRVDAGTTSVHAELEDCVAKYVGQPAAVIFGMGYATNSAIIPVLIGKGGLIISDSLNHTSIVNGARGSGATIRVFQHNTPGHLEKVLKEQIAEGQPRTHRPWKKIIVVVEGIYSMEGEICHLPEIVSICKKYKAYVYLDEAHSIGAIGKTGRGVCELLGVDTSDVDIMMGTFTKSFGSCGGYIAGSKDLIQYLKHQCPAHLYATSISTPSATQIISAIKVILGEDGSNRGAQKLARIRENSNFFRAELQKMGFEVLGDNDSPVMPIMLYNPAKIPAFSRECLRENLAVVVVGFPATPLLLARARICISASHSREDLIKALQVISKAGDLTGIKYFPAAPKKQEVEKNGIKLD.

A helical membrane pass occupies residues 2 to 22 (ITIPYLTAVSTYFSYGLLFAF). Lys311 carries the N6-(pyridoxal phosphate)lysine modification.

Belongs to the class-II pyridoxal-phosphate-dependent aminotransferase family. In terms of assembly, heterodimer with LCB1. Component of the serine palmitoyltransferase (SPT) complex, composed of LCB1 and LCB2 (LCB2a or LCB2b). It depends on pyridoxal 5'-phosphate as a cofactor. As to expression, ubiquitous with the highest expression in flowers.

It localises to the endoplasmic reticulum membrane. The catalysed reaction is L-serine + hexadecanoyl-CoA + H(+) = 3-oxosphinganine + CO2 + CoA. It participates in lipid metabolism; sphingolipid metabolism. Its function is as follows. Serine palmitoyltransferase (SPT). The heterodimer formed with LCB1 constitutes the catalytic core. Plays an important role during male gametogenesis and embryogenesis. This chain is Long chain base biosynthesis protein 2b (LCB2b), found in Arabidopsis thaliana (Mouse-ear cress).